The primary structure comprises 345 residues: Cytoskeleton protein RodZ (345 aa).

Residues 1–111 (MNTEASQDQT…LGKKHKKRDG (111 aa)) are Cytoplasmic-facing. Residues 19 to 79 (LRQARESLGL…KLVHLPEDEL (61 aa)) enclose the HTH cro/C1-type domain. Positions 30–49 (QQTVAERLCLKVSTIRDIEE) form a DNA-binding region, H-T-H motif. A helical; Signal-anchor for type II membrane protein membrane pass occupies residues 112–132 (WLMSFTWLIVLVVLGLTGAWW). Residues 133 to 345 (WQNHQAQQAE…RVARLTVGVE (213 aa)) are Periplasmic-facing. The tract at residues 151–260 (SAQLSQNGGQ…LPTADAGVSG (110 aa)) is disordered. Positions 188-225 (PLTNHSGSAITNSATTSSVPKTTSTEPVDTANTNTTMH) are enriched in polar residues. Positions 229–241 (AASAAVSPSQVPQ) are enriched in low complexity.

This sequence belongs to the RodZ family.

The protein localises to the cell inner membrane. Its function is as follows. Cytoskeletal protein that is involved in cell-shape control through regulation of the length of the long axis. The chain is Cytoskeleton protein RodZ from Yersinia pestis (strain Pestoides F).